We begin with the raw amino-acid sequence, 1192 residues long: Leucine-rich repeat receptor protein kinase EMS1 (1192 aa).

A signal peptide spans 1 to 18 (MAFLTALFLFLFFSFSSS). Asn47 carries N-linked (GlcNAc...) asparagine glycosylation. LRR repeat units lie at residues 64 to 87 (LGRV…EISS), 90 to 112 (NLRE…IWNL), 114 to 137 (HLQT…SELP), 138 to 160 (QLLY…FFIS), 163 to 185 (ALSS…IGKL), 187 to 209 (NLSN…IGNI), 235 to 257 (HLAK…FGEL), 259 to 281 (NLSI…LGNC), 283 to 304 (SLKS…ELSE), 330 to 352 (VLDS…IEDC), 354 to 376 (MLKH…LCGS), 378 to 400 (SLEA…FDGC), 402 to 425 (SLGE…WKLP), 426 to 447 (LMAL…LWKS), 449 to 471 (NLME…IGNA), 473 to 496 (SLKR…GKLT), 497 to 520 (SLSV…GDCT), 521 to 543 (SLTT…ITAL), 545 to 567 (QLQC…PSAY), 581 to 603 (HHGI…LGEC), 605 to 628 (VLVE…SRLT), 629 to 651 (NLTI…MGNS), 653 to 675 (KLQG…FGLL), 677 to 697 (SLVK…ASLG), 701 to 723 (ELTH…LSTM), 725 to 748 (KLVG…GNLT), 749 to 772 (QLEY…CGLP), and 773 to 795 (NLEF…GVCQ). N-linked (GlcNAc...) asparagine glycosylation is found at Asn171, Asn187, and Asn208. Asn259 is a glycosylation site (N-linked (GlcNAc...) asparagine). Asn414 and Asn435 each carry an N-linked (GlcNAc...) asparagine glycan. N-linked (GlcNAc...) asparagine glycosylation occurs at Asn555. Asn629 is a glycosylation site (N-linked (GlcNAc...) asparagine). N-linked (GlcNAc...) asparagine glycosylation is found at Asn682, Asn711, and Asn746. The chain crosses the membrane as a helical span at residues 828 to 848 (WGIAGLMLGFTIIVFVFVFSL). At Thr914 the chain carries Phosphothreonine. Residues 917-1192 (FSKKNIIGDG…LDVLKALKEI (276 aa)) enclose the Protein kinase domain. ATP contacts are provided by residues 923-931 (IGDGGFGTV) and Lys945. Phosphotyrosine is present on Tyr990. Residue Asp1043 is the Proton acceptor of the active site. Tyr1085 is modified (phosphotyrosine).

Belongs to the protein kinase superfamily. Ser/Thr protein kinase family. In terms of assembly, interacts with TPD1. Post-translationally, autophosphorylates in vitro. As to expression, present in young buds, open flowers and siliques but absent from mature leaves and roots. Strongly expressed in the young organ primordia, and as the anthers and ovules developed, became focused in the microsporangia and in the distal and chalazal regions of the ovule. In cv. Landsberg erecta, only expressed in the anthers of young floral buds.

Its subcellular location is the cell membrane. The catalysed reaction is L-seryl-[protein] + ATP = O-phospho-L-seryl-[protein] + ADP + H(+). It catalyses the reaction L-threonyl-[protein] + ATP = O-phospho-L-threonyl-[protein] + ADP + H(+). Functionally, receptor with a serine/threonine-protein kinase activity required for the specification of the correct number of male archesporial initials and for the subsequent specification of tapetal and middle cell layer identities. In seeds, required for enhancing cell size and the rate of embryonic development. In Arabidopsis thaliana (Mouse-ear cress), this protein is Leucine-rich repeat receptor protein kinase EMS1.